A 1558-amino-acid polypeptide reads, in one-letter code: MTSEDKTALCAENILNDIYILTINRNIDIDIIQEGLLRKVMDEEESNSILFLEDSSFSKNDISILNVHLKIEDGKNKYNNYYEFKYADINVTIDFYQKECKYSIEKSNMHKCHYFKMMNKINYITEQKMDFKDSILYLYNTINDKNFFKCPCWLNDNKNIKLNNIINDHQQKKKKKNLYDKSVQVTNDVTNIMVNEIQEQKMKKPIFFDNKNDLNNSDDEFNSAHSSLIKINKLLNVEENDIFHNLKGHVYEEYFDKHEDNKNQKDNIESNIIVKDKKDRANNIISEQMKEDYIKNVEEVLSKHINNNKNNNVEDSVSLYSLDEEISEQIDKQHFFSIDKRQDEISNFIQMEENINDHMNDNINKMGKKKHGKENRVVEDEKYIQDDKKKKRFYRNVNDNIPLTVQLANKGNEICKEIIEMNSRYYRDFFEEKILGCGGFGYVMKVKNKKFNITYALKIIRLSNSKYNTQTNNKHINEKDNNSYIMEEAIMIAKLQHENIVRYYDAWVEENVDFFLYKELQNEFKNIKIKIKNEKMKNEKMKNEKIISGKIKNENIKSENIKSENIKSENIKSENIKSEKVKNLYIEEIKYFWNHYKKNKDPNVNDKYLYILMEYCPGKTLREAIDCGFICRNEKLIWELIKQILKGISYIHDMKIMHRDIKPSNIFLQITDNILIAKIGDFGLTTRIGDTQINPSAGTIHYISPEQLNGEPFNEKADIFSLGVVFFEMFHEPFSTSMERSITLSNLLKGIYPEYMKADNKKFQFLSSLLAINPQERCCAYNLLHESVLFTFEKDFTDIYNLIDNKRNCEEVHTIISTLFDKFEYLNSDKILKKEDFSTFQNAKIFTDDLEMRKKQKIIKKKILISLKKRGAIFILTPIILLNKYYINLENTYMEEYNIYYNINKKKENKINNIYINTNKNKNIDNLIYMLDIYGNSITLRNSFFLSFAEYIYESIDSYNKYNEDNLFYKFYTYGYTYKNQIIKSNKHIKKDTINNNINTTINITTTTCNTTTGTSTNNNNNNNNNNMGNNNIGNNMGNNVSNIISNNNINNHMISNNPFYFYNIYPDENEKMFYCILSSSKNVFGNEELNYLSIFSNADIMVSIYTLYNHINYFNKLLFVWSYIDLLEIILKECLDIPNDISYHLSIDLKKNSTLLVNKSFVMSLLQKYKIKDMSKISDHILSLFYIKCESNKVDDYLNNIYNFVDDLLNKKSSLQLKRNTSITPKEVPYVRSRSNNISTSASKIIKYDIQKNVGTKEKGNQNDNEKKKMQIYSILDRIKKINNFICTNTVINNTCFDLFLNYEESIFCNEVIFYVICESKNKEIIAYGGRFDEIIRNMANEVKYKNHANYKYVYNNIKDIYNNNNNNNNNDNNIMNIKAYGVEIYLDKIYSKVIESNEKISIHLQYNPSTDKSQLFKNFVTSCQQNDFACTSHIIQQPLLNDDYLNYSSTKILIQVYEISNLLIAYDLSKKLLTKNISSYTHLSINNVNIKKKIKNFKPHKIQFFITIKSNNTDNSFDALKPINFDNVVYKIVNYDDQDCNFMDQAELINYLIKYF.

The Protein kinase domain occupies 429 to 789 (FFEEKILGCG…AYNLLHESVL (361 aa)). ATP-binding positions include 435-443 (LGCGGFGYV) and Lys-458. Catalysis depends on Asp-660, which acts as the Proton acceptor. The interval 1014 to 1033 (GTSTNNNNNNNNNNMGNNNI) is disordered.

It belongs to the protein kinase superfamily. Ser/Thr protein kinase family. GCN2 subfamily. Post-translationally, auto-phosphorylated.

It carries out the reaction L-seryl-[protein] + ATP = O-phospho-L-seryl-[protein] + ADP + H(+). It catalyses the reaction L-threonyl-[protein] + ATP = O-phospho-L-threonyl-[protein] + ADP + H(+). In blood stage parasites, phosphorylates translation factor eIF2alpha in response to amino acid starvation. During the asexual blood stage, involved in the response to the host hormone melatonin which is used by the parasite to modulate its cell cycle. In Plasmodium falciparum (isolate 3D7), this protein is Eukaryotic translation initiation factor 2-alpha kinase 1.